The primary structure comprises 475 residues: Ribulose bisphosphate carboxylase large chain (475 aa).

A propeptide spanning residues 1–2 (MS) is cleaved from the precursor. Proline 3 bears the N-acetylproline mark. The residue at position 14 (lysine 14) is an N6,N6,N6-trimethyllysine. Substrate-binding residues include asparagine 123 and threonine 173. Catalysis depends on lysine 175, which acts as the Proton acceptor. Lysine 177 contributes to the substrate binding site. Residues lysine 201, aspartate 203, and glutamate 204 each contribute to the Mg(2+) site. Lysine 201 carries the N6-carboxylysine modification. Histidine 294 acts as the Proton acceptor in catalysis. Residues arginine 295, histidine 327, and serine 379 each coordinate substrate.

It belongs to the RuBisCO large chain family. Type I subfamily. Heterohexadecamer of 8 large chains and 8 small chains; disulfide-linked. The disulfide link is formed within the large subunit homodimers. The cofactor is Mg(2+). Post-translationally, the disulfide bond which can form in the large chain dimeric partners within the hexadecamer appears to be associated with oxidative stress and protein turnover.

It is found in the plastid. It localises to the chloroplast. The enzyme catalyses 2 (2R)-3-phosphoglycerate + 2 H(+) = D-ribulose 1,5-bisphosphate + CO2 + H2O. The catalysed reaction is D-ribulose 1,5-bisphosphate + O2 = 2-phosphoglycolate + (2R)-3-phosphoglycerate + 2 H(+). Functionally, ruBisCO catalyzes two reactions: the carboxylation of D-ribulose 1,5-bisphosphate, the primary event in carbon dioxide fixation, as well as the oxidative fragmentation of the pentose substrate in the photorespiration process. Both reactions occur simultaneously and in competition at the same active site. This is Ribulose bisphosphate carboxylase large chain from Mesostigma viride (Green alga).